We begin with the raw amino-acid sequence, 384 residues long: Probable peptidoglycan glycosyltransferase FtsW (384 aa).

Over 1–19 the chain is Cytoplasmic; it reads MAAVWRWFVPERPSFYDRG. Residues 20–40 form a helical membrane-spanning segment; that stretch reads LLALTFSLMGIGLMMVASASI. Topologically, residues 41–54 are periplasmic; that stretch reads KEGPGGDMFYFTKR. Residues 55 to 75 form a helical membrane-spanning segment; the sequence is HLIFLFVCLGIGVGTLYLPLE. Topologically, residues 76 to 83 are cytoplasmic; sequence RWREWSGR. A helical transmembrane segment spans residues 84–104; the sequence is LLVGALGLLFAVLAVGRTVNG. The Periplasmic portion of the chain corresponds to 105-110; that stretch reads AKRWIG. Residues 111–131 form a helical membrane-spanning segment; the sequence is FGFFNIQPAELAKLALIVFIA. The Cytoplasmic portion of the chain corresponds to 132 to 143; sequence SYLVRRSDEVRG. The helical transmembrane segment at 144 to 164 threads the bilayer; sequence NIAGFVKPLAVVFLLAIMLLA. The Periplasmic portion of the chain corresponds to 165-166; it reads QP. Residues 167–187 form a helical membrane-spanning segment; it reads DLGSVVVLFVCTFGLLFIGGA. Lysine 188 is a topological domain (cytoplasmic). The chain crosses the membrane as a helical span at residues 189–209; it reads LVQFIAIIVAGLSALAGLIIY. Residues 210–267 are Periplasmic-facing; the sequence is EPYRLRRVTSFLDPWADPFGSGYQLTQSLMAFGRGGFFGQGLGNSVQKLSYLPEAHTD. A helical membrane pass occupies residues 268-288; that stretch reads FVFAILGEELGYFGVLVVLFL. The Cytoplasmic segment spans residues 289 to 316; it reads QLLLAMKALQIGRTALLRSKFFEGYMAC. A helical membrane pass occupies residues 317-337; sequence GIGIWFSFQTVVNVGAAAGML. The Periplasmic segment spans residues 338–343; it reads PTKGLT. The helical transmembrane segment at 344–364 threads the bilayer; sequence LPLVSYGGSSLIAITMAVAIL. At 365–384 the chain is on the cytoplasmic side; that stretch reads LRIDFERRLDTSHVIQREAA.

The protein belongs to the SEDS family. FtsW subfamily.

It is found in the cell inner membrane. It carries out the reaction [GlcNAc-(1-&gt;4)-Mur2Ac(oyl-L-Ala-gamma-D-Glu-L-Lys-D-Ala-D-Ala)](n)-di-trans,octa-cis-undecaprenyl diphosphate + beta-D-GlcNAc-(1-&gt;4)-Mur2Ac(oyl-L-Ala-gamma-D-Glu-L-Lys-D-Ala-D-Ala)-di-trans,octa-cis-undecaprenyl diphosphate = [GlcNAc-(1-&gt;4)-Mur2Ac(oyl-L-Ala-gamma-D-Glu-L-Lys-D-Ala-D-Ala)](n+1)-di-trans,octa-cis-undecaprenyl diphosphate + di-trans,octa-cis-undecaprenyl diphosphate + H(+). Its pathway is cell wall biogenesis; peptidoglycan biosynthesis. Functionally, peptidoglycan polymerase that is essential for cell division. The polypeptide is Probable peptidoglycan glycosyltransferase FtsW (Tolumonas auensis (strain DSM 9187 / NBRC 110442 / TA 4)).